The following is a 396-amino-acid chain: NAD(P)H oxidoreductase RTN4IP1, mitochondrial (396 aa).

A mitochondrion-targeting transit peptide spans 1–40; that stretch reads MGVLKTCVLRRSACAAACFWRRTVIPKPPFRGISTTSARS. Residues 52 to 393 enclose the Enoyl reductase (ER) domain; that stretch reads GKNEVLRFTQ…RGHARGKTVV (342 aa). Positions 214, 216, 217, 237, 255, 276, 300, 341, 343, 386, 387, and 388 each coordinate NADPH.

This sequence belongs to the zinc-containing alcohol dehydrogenase family. Quinone oxidoreductase subfamily. Interacts with RTN4, UQCRC1 and UQCRC2. In terms of tissue distribution, widely expressed in mitochondria-enriched tissues. Found in heart, kidney, liver, brain and spinal cord.

It is found in the mitochondrion matrix. Its subcellular location is the mitochondrion outer membrane. The catalysed reaction is a 3-demethylubiquinone + NADH + 2 H(+) = a 3-demethylubiquinol + NAD(+). It carries out the reaction a 3-demethylubiquinone + NADPH + 2 H(+) = a 3-demethylubiquinol + NADP(+). The enzyme catalyses 3-demethylubiquinone-10 + NADH + 2 H(+) = 3-demethylubiquinol-10 + NAD(+). It catalyses the reaction 3-demethylubiquinone-10 + NADPH + 2 H(+) = 3-demethylubiquinol-10 + NADP(+). The protein operates within cofactor biosynthesis; ubiquinone biosynthesis. Functionally, NAD(P)H oxidoreductase involved in the ubiquinone biosynthetic pathway. Required for the O-methyltransferase activity of COQ3. Able to catalyze the oxidoreduction of 3-demethylubiquinone into 3-demethylubiquinol in vitro. However, it is unclear if 3-demethylubiquinone constitutes a substrate in vivo. May also play a role in the regulation of retinal ganglion cell (RGC) neurite outgrowth, and hence in the development of the inner retina and optic nerve. Appears to be a potent inhibitor of regeneration following spinal cord injury. The protein is NAD(P)H oxidoreductase RTN4IP1, mitochondrial of Mus musculus (Mouse).